Reading from the N-terminus, the 486-residue chain is Patatin-like phospholipase domain-containing protein 2 (486 aa).

Residues 1–8 are Cytoplasmic-facing; sequence MFPKETTW. The chain crosses the membrane as a helical span at residues 9 to 29; sequence NISFAGCGFLGVYHIGVASCL. The 170-residue stretch at 10–179 folds into the PNPLA domain; sequence ISFAGCGFLG…SDNLPLYELK (170 aa). The short motif at 14–19 is the GXGXXG element; it reads GCGFLG. Residues 30-42 lie on the Extracellular side of the membrane; it reads REHAPFLVANATH. A glycan (N-linked (GlcNAc...) asparagine) is linked at N39. A helical membrane pass occupies residues 43-63; it reads IYGASAGALTATALVTGACLG. Positions 45–49 match the GXSXG motif; sequence GASAG. Residue S47 is the Nucleophile of the active site. Topologically, residues 64-137 are cytoplasmic; it reads EAGANIIEVS…IITHFNSKEE (74 aa). Residue K92 forms a Glycyl lysine isopeptide (Lys-Gly) (interchain with G-Cter in ubiquitin) linkage. A helical transmembrane segment spans residues 138–158; the sequence is LIQANVCSTFIPVYCGLIPPS. Residues 159–334 are Extracellular-facing; the sequence is LQGVRYVDGG…TTLSNMLPVR (176 aa). Residue D166 is the Proton acceptor of the active site. A DGA/G motif is present at residues 166-168; the sequence is DGG. Residues 335 to 355 traverse the membrane as a helical segment; that stretch reads LAMAMMVPYTLPLESAVSFTI. At 356–486 the chain is on the cytoplasmic side; it reads RLLEWLPDVP…PQHPPSSPPC (131 aa). A Phosphoserine; in vitro modification is found at S377. 2 positions are modified to phosphoserine; by PKA: S399 and S409. Phosphoserine; in vitro is present on S433.

As to quaternary structure, interacts with ABHD5; this association stimulates PNPLA2 triglyceride hydrolase activity. Interacts with SERPINF1; this interaction stimulates the phospholipase A2 activity of PNPLA2. Despite a colocalization in lipid droplets, it probably does not interact with PLIN. Interacts with PLIN5; prevents interaction with ABHD5. Interacts with FAF2. Phosphorylation at Ser-409 by PKA is increased during fasting and moderate intensity exercise, and moderately increases lipolytic activity. In terms of processing, ubiquitinated by PEX2 in response to reactive oxygen species (ROS), leading to its degradation. Ubiquitination is stimulated by LDAH.

Its subcellular location is the lipid droplet. The protein localises to the cell membrane. It is found in the cytoplasm. The catalysed reaction is a triacylglycerol + H2O = a diacylglycerol + a fatty acid + H(+). It catalyses the reaction a triacylglycerol + H2O = a 1,2-diacylglycerol + a fatty acid + H(+). The enzyme catalyses a triacylglycerol + H2O = a 1,3-diacylglycerol + a fatty acid + H(+). It carries out the reaction a triacyl-sn-glycerol + H2O = a 1,3-diacyl-sn-glycerol + a fatty acid + H(+). The catalysed reaction is a triacyl-sn-glycerol + H2O = a 2,3-diacyl-sn-glycerol + a fatty acid + H(+). It catalyses the reaction a 1-acylglycerol + a 1,3-diacylglycerol = a triacylglycerol + glycerol. The enzyme catalyses a 1-acylglycerol + a 1,2-diacylglycerol = a triacylglycerol + glycerol. It carries out the reaction 2 a 1-acylglycerol = a 1,2-diacylglycerol + glycerol. The catalysed reaction is a triacylglycerol + all-trans-retinol = an all-trans-retinyl ester + a diacylglycerol. It catalyses the reaction 1,2-di-(9Z-octadecenoyl)-glycerol + (9Z)-octadecenoate + H(+) = 1,2,3-tri-(9Z-octadecenoyl)-glycerol + H2O. The enzyme catalyses 1,2,3-tri-(9Z-octadecenoyl)-glycerol + H2O = 1,3-di-(9Z-octadecenoyl)-glycerol + (9Z)-octadecenoate + H(+). It carries out the reaction 1-(9Z-octadecenoyl)-glycerol + 1,3-di-(9Z-octadecenoyl)-glycerol = 1,2,3-tri-(9Z-octadecenoyl)-glycerol + glycerol. The catalysed reaction is 1-(9Z-octadecenoyl)-glycerol + 1,2-di-(9Z-octadecenoyl)-glycerol = 1,2,3-tri-(9Z-octadecenoyl)-glycerol + glycerol. It catalyses the reaction 2 1-(9Z-octadecenoyl)-glycerol = 1,2-di-(9Z-octadecenoyl)-glycerol + glycerol. The enzyme catalyses 1,2,3-tri-(9Z-octadecenoyl)-glycerol + all-trans-retinol = all-trans-retinyl 9Z-octadecenoate + di-(9Z)-octadecenoylglycerol. It carries out the reaction 1,2,3-tri-(9Z)-hexadecenoylglycerol + H2O = 1,3-di-(9Z)-hexadecenoylglycerol + (9Z)-hexadecenoate + H(+). The catalysed reaction is 1,2,3-tri-(9Z,12Z)-octadecadienoylglycerol + H2O = 1,3-di-(9Z,12Z)-octadecadienoylglycerol + (9Z,12Z)-octadecadienoate + H(+). It catalyses the reaction 1,2,3-tri-(9Z,12Z,15Z)-octadecatrienoylglycerol + H2O = 1,3-di-(9Z,12Z,15Z)-octadecatrienoylglycerol + (9Z,12Z,15Z)-octadecatrienoate + H(+). The enzyme catalyses 1,3-di-(9Z)-octadecenoyl-2-hexadecanoylglycerol + H2O = 1,3-di-(9Z-octadecenoyl)-glycerol + hexadecanoate + H(+). It carries out the reaction 1,2-di-(9Z)-octadecenoyl-3-hexadecanoyl-sn-glycerol + H2O = 1-(9Z)-octadecenoyl-3-hexadecanoyl-sn-glycerol + (9Z)-octadecenoate + H(+). The catalysed reaction is 1-hexadecanoyl-2,3-di-(9Z)-octadecenoyl-sn-glycerol + H2O = 1-hexadecanoyl-3-(9Z)-octadecenoyl-sn-glycerol + (9Z)-octadecenoate + H(+). It catalyses the reaction 1,2,3-tri-(9Z-octadecenoyl)-glycerol + H2O = 2,3-di-(9Z)-octadecenoyl-sn-glycerol + (9Z)-octadecenoate + H(+). The enzyme catalyses 1,2,3-tri-(9Z)-hexadecenoylglycerol + H2O = 2,3-di-(9Z)-hexadecenoyl-sn-glycerol + (9Z)-hexadecenoate + H(+). It carries out the reaction 1,2,3-tri-(9Z,12Z)-octadecadienoylglycerol + H2O = 2,3-di-(9Z,12Z)-octadecadienoyl-sn-glycerol + (9Z,12Z)-octadecadienoate + H(+). The catalysed reaction is 1,2,3-tri-(9Z,12Z,15Z)-octadecatrienoylglycerol + H2O = 2,3-di-(9Z,12Z,15Z)-octadecatrienoyl-sn-glycerol + (9Z,12Z,15Z)-octadecatrienoate + H(+). It catalyses the reaction 1,3-di-(9Z)-octadecenoyl-2-hexadecanoylglycerol + H2O = 2-hexadecanoyl-3-(9Z)-octadecenoyl-sn-glycerol + (9Z)-octadecenoate + H(+). The enzyme catalyses 1-hexadecanoyl-2,3-di-(9Z)-octadecenoyl-sn-glycerol + H2O = 2,3-di-(9Z)-octadecenoyl-sn-glycerol + hexadecanoate + H(+). It carries out the reaction 1,2-di-(9Z)-octadecenoyl-3-hexadecanoyl-sn-glycerol + H2O = 2-(9Z-octadecenoyl)-3-hexadecanoyl-sn-glycerol + (9Z)-octadecenoate + H(+). The catalysed reaction is a 1,2-diacyl-sn-glycero-3-phosphocholine + H2O = a 1-acyl-sn-glycero-3-phosphocholine + a fatty acid + H(+). It catalyses the reaction 1,2,3-tri-(9Z-octadecenoyl)-glycerol + 9-hydroxy-octadecanoate = 9-(9Z-octadecenoyloxy)-octadecanoate + 2,3-di-(9Z)-octadecenoyl-sn-glycerol. The enzyme catalyses 1-hexadecanoyl-2,3-di-(9Z)-octadecenoyl-sn-glycerol + 9-hydroxy-octadecanoate = 9-hexadecanoyloxy-octadecanoate + 2,3-di-(9Z)-octadecenoyl-sn-glycerol. It carries out the reaction 1,2,3-tri-(10Z)-heptadecenoylglycerol + 9-hydroxy-octadecanoate = 2,3-di-(10Z-heptadecenoyl)-sn-glycerol + 9-(10Z-heptadecenoyloxy)-octadecanoate. The catalysed reaction is 1,2,3-tri-(9Z,12Z)-octadecadienoylglycerol + 9-hydroxy-octadecanoate = 2,3-di-(9Z,12Z)-octadecadienoyl-sn-glycerol + 9-(9Z,12Z-octadecadienoyloxy)-octadecanoate. It catalyses the reaction 1,2,3-tri-(9Z)-hexadecenoylglycerol + 9-hydroxy-octadecanoate = 2,3-di-(9Z)-hexadecenoyl-sn-glycerol + 9-(9Z-hexadecenoyloxy)-octadecanoate. The enzyme catalyses 9-hydroxy-octadecanoate + 1,2-di-(9Z-octadecenoyl)-sn-glycerol = 9-(9Z-octadecenoyloxy)-octadecanoate + 2-(9Z-octadecenoyl)-glycerol. It carries out the reaction 1-hexadecanoyl-2,3-di-(9Z)-octadecenoyl-sn-glycerol + 9-hydroxy-octadecanoate = 1-hexadecanoyl-3-(9Z)-octadecenoyl-sn-glycerol + 9-(9Z-octadecenoyloxy)-octadecanoate. It participates in glycerolipid metabolism; triacylglycerol degradation. In terms of biological role, catalyzes the initial step in triglyceride hydrolysis in adipocyte and non-adipocyte lipid droplets. Exhibits a strong preference for the hydrolysis of long-chain fatty acid esters at the sn-2 position of the glycerol backbone and acts coordinately with LIPE/HLS and DGAT2 within the lipolytic cascade. Also possesses acylglycerol transacylase and phospholipase A2 activities. Transfers fatty acid from triglyceride to retinol, hydrolyzes retinylesters, and generates 1,3-diacylglycerol from triglycerides. Regulates adiposome size and may be involved in the degradation of adiposomes. Catalyzes the formation of an ester bond between hydroxy fatty acids and fatty acids derived from triglycerides or diglycerides to generate fatty acid esters of hydroxy fatty acids (FAHFAs) in adipocytes. Acts antagonistically with LDAH in regulation of cellular lipid stores. Inhibits LDAH-stimulated lipid droplet fusion. May play an important role in energy homeostasis. May play a role in the response of the organism to starvation, enhancing hydrolysis of triglycerides and providing free fatty acids to other tissues to be oxidized in situations of energy depletion. The sequence is that of Patatin-like phospholipase domain-containing protein 2 (PNPLA2) from Bos taurus (Bovine).